The chain runs to 888 residues: DNA mismatch repair protein MutS (888 aa).

Gly-641–Ser-648 contributes to the ATP binding site.

The protein belongs to the DNA mismatch repair MutS family.

Functionally, this protein is involved in the repair of mismatches in DNA. It is possible that it carries out the mismatch recognition step. This protein has a weak ATPase activity. The sequence is that of DNA mismatch repair protein MutS from Rickettsia bellii (strain OSU 85-389).